Consider the following 155-residue polypeptide: 6,7-dimethyl-8-ribityllumazine synthase (155 aa).

5-amino-6-(D-ribitylamino)uracil contacts are provided by residues W24, 58–60, and 82–84; these read AFE and AVI. Residue 87–88 coordinates (2S)-2-hydroxy-3-oxobutyl phosphate; sequence GT. The Proton donor role is filled by H90. Residue F115 coordinates 5-amino-6-(D-ribitylamino)uracil. Residue R129 coordinates (2S)-2-hydroxy-3-oxobutyl phosphate.

Belongs to the DMRL synthase family. As to quaternary structure, forms an icosahedral capsid composed of 60 subunits, arranged as a dodecamer of pentamers.

The enzyme catalyses (2S)-2-hydroxy-3-oxobutyl phosphate + 5-amino-6-(D-ribitylamino)uracil = 6,7-dimethyl-8-(1-D-ribityl)lumazine + phosphate + 2 H2O + H(+). Its pathway is cofactor biosynthesis; riboflavin biosynthesis; riboflavin from 2-hydroxy-3-oxobutyl phosphate and 5-amino-6-(D-ribitylamino)uracil: step 1/2. Catalyzes the formation of 6,7-dimethyl-8-ribityllumazine by condensation of 5-amino-6-(D-ribitylamino)uracil with 3,4-dihydroxy-2-butanone 4-phosphate. This is the penultimate step in the biosynthesis of riboflavin. The sequence is that of 6,7-dimethyl-8-ribityllumazine synthase from Saccharophagus degradans (strain 2-40 / ATCC 43961 / DSM 17024).